Consider the following 122-residue polypeptide: Large ribosomal subunit protein uL14 (122 aa).

This sequence belongs to the universal ribosomal protein uL14 family. In terms of assembly, part of the 50S ribosomal subunit. Forms a cluster with proteins L3 and L19. In the 70S ribosome, L14 and L19 interact and together make contacts with the 16S rRNA in bridges B5 and B8.

In terms of biological role, binds to 23S rRNA. Forms part of two intersubunit bridges in the 70S ribosome. This is Large ribosomal subunit protein uL14 from Pelobacter propionicus (strain DSM 2379 / NBRC 103807 / OttBd1).